A 166-amino-acid polypeptide reads, in one-letter code: MHENQQPQTEAFELSAAEREAIEHEMHHYEDPRAASIEALKIVQKQRGWVPDGAIHAIADVLGIPASDVEGVATFYSQIFRQPVGRHVIRYCDSVVCHINGYQGIQAALEKKLNIKPGQTTFDGRFTLLPTCCLGNCDKGPNMMIDEDTHAHLTPEAIPELLERYK.

Residues Cys-92, Cys-97, Cys-133, and Cys-137 each contribute to the [2Fe-2S] cluster site.

The protein belongs to the complex I 24 kDa subunit family. Composed of 13 different subunits. Subunits NuoCD, E, F, and G constitute the peripheral sector of the complex. Requires [2Fe-2S] cluster as cofactor.

It catalyses the reaction a quinone + NADH + 5 H(+)(in) = a quinol + NAD(+) + 4 H(+)(out). NDH-1 shuttles electrons from NADH, via FMN and iron-sulfur (Fe-S) centers, to quinones in the respiratory chain. The immediate electron acceptor for the enzyme in this species is believed to be ubiquinone. Couples the redox reaction to proton translocation (for every two electrons transferred, four hydrogen ions are translocated across the cytoplasmic membrane), and thus conserves the redox energy in a proton gradient. In Shigella flexneri, this protein is NADH-quinone oxidoreductase subunit E (nuoE).